The following is a 561-amino-acid chain: DNA ligase B (561 aa).

The active-site N6-AMP-lysine intermediate is the K125.

It belongs to the NAD-dependent DNA ligase family. LigB subfamily.

The catalysed reaction is NAD(+) + (deoxyribonucleotide)n-3'-hydroxyl + 5'-phospho-(deoxyribonucleotide)m = (deoxyribonucleotide)n+m + AMP + beta-nicotinamide D-nucleotide.. Catalyzes the formation of phosphodiester linkages between 5'-phosphoryl and 3'-hydroxyl groups in double-stranded DNA using NAD as a coenzyme and as the energy source for the reaction. The polypeptide is DNA ligase B (Salmonella paratyphi B (strain ATCC BAA-1250 / SPB7)).